Reading from the N-terminus, the 379-residue chain is Cobalt-precorrin-5B C(1)-methyltransferase (379 aa).

Belongs to the CbiD family.

The enzyme catalyses Co-precorrin-5B + S-adenosyl-L-methionine = Co-precorrin-6A + S-adenosyl-L-homocysteine. It participates in cofactor biosynthesis; adenosylcobalamin biosynthesis; cob(II)yrinate a,c-diamide from sirohydrochlorin (anaerobic route): step 6/10. Catalyzes the methylation of C-1 in cobalt-precorrin-5B to form cobalt-precorrin-6A. This Klebsiella pneumoniae subsp. pneumoniae (strain ATCC 700721 / MGH 78578) protein is Cobalt-precorrin-5B C(1)-methyltransferase.